Here is a 326-residue protein sequence, read N- to C-terminus: Metallophosphoesterase domain-containing protein 1 (326 aa).

Belongs to the UPF0046 family.

Functionally, may have metallophosphoesterase activity (in vitro). This Mus musculus (Mouse) protein is Metallophosphoesterase domain-containing protein 1 (Mpped1).